The chain runs to 344 residues: Dihydroorotase (344 aa).

Residues histidine 14 and histidine 16 each contribute to the Zn(2+) site. Residues 16 to 18 (HFR) and asparagine 42 each bind substrate. Residues lysine 100, histidine 137, and histidine 175 each coordinate Zn(2+). Lysine 100 is subject to N6-carboxylysine. Residue histidine 137 participates in substrate binding. Leucine 220 is a substrate binding site. Residue aspartate 248 participates in Zn(2+) binding. Aspartate 248 is a catalytic residue. Histidine 252 and alanine 264 together coordinate substrate.

The protein belongs to the metallo-dependent hydrolases superfamily. DHOase family. Class II DHOase subfamily. As to quaternary structure, homodimer. Zn(2+) serves as cofactor.

It catalyses the reaction (S)-dihydroorotate + H2O = N-carbamoyl-L-aspartate + H(+). It functions in the pathway pyrimidine metabolism; UMP biosynthesis via de novo pathway; (S)-dihydroorotate from bicarbonate: step 3/3. In terms of biological role, catalyzes the reversible cyclization of carbamoyl aspartate to dihydroorotate. The sequence is that of Dihydroorotase from Erythrobacter litoralis (strain HTCC2594).